Here is a 421-residue protein sequence, read N- to C-terminus: D-amino acid dehydrogenase (421 aa).

FAD is bound at residue 3–17 (VIVLGSGVIGVASAY).

It belongs to the DadA oxidoreductase family. FAD is required as a cofactor.

The enzyme catalyses a D-alpha-amino acid + A + H2O = a 2-oxocarboxylate + AH2 + NH4(+). Its pathway is amino-acid degradation; D-alanine degradation; NH(3) and pyruvate from D-alanine: step 1/1. Functionally, oxidative deamination of D-amino acids. This Acinetobacter baumannii (strain SDF) protein is D-amino acid dehydrogenase.